The primary structure comprises 891 residues: von Willebrand factor A domain-containing protein 7 (891 aa).

Positions 1–28 (MLPTEVPQSHPGPSALLLLQLLLPPTSA) are cleaved as a signal peptide. Asparagine 55 carries an N-linked (GlcNAc...) asparagine glycan. Positions 237–272 (PKPPGKCSHGGHFDRSSSQPPRGGINKDSTSPGFSP) are disordered. Residues 313-506 (ASSLSFVLDT…SMAALVTLPL (194 aa)) enclose the VWFA domain.

Expressed at low level in different cell lines.

Its subcellular location is the secreted. The chain is von Willebrand factor A domain-containing protein 7 (VWA7) from Homo sapiens (Human).